A 234-amino-acid polypeptide reads, in one-letter code: NAD-dependent protein deacylase (234 aa).

The Deacetylase sirtuin-type domain occupies 1-234; it reads MKNLVVLTGA…ELKQLLIPAP (234 aa). An NAD(+)-binding site is contributed by 9–28; the sequence is GAGMSAESGISTFRDAGGLW. Substrate is bound by residues Tyr53 and Arg56. Position 86–89 (86–89) interacts with NAD(+); sequence QNVD. Residue His104 is the Proton acceptor of the active site. Residue 175 to 177 participates in NAD(+) binding; that stretch reads GTS.

Belongs to the sirtuin family. Class III subfamily.

The protein localises to the cytoplasm. The catalysed reaction is N(6)-acetyl-L-lysyl-[protein] + NAD(+) + H2O = 2''-O-acetyl-ADP-D-ribose + nicotinamide + L-lysyl-[protein]. It carries out the reaction N(6)-succinyl-L-lysyl-[protein] + NAD(+) + H2O = 2''-O-succinyl-ADP-D-ribose + nicotinamide + L-lysyl-[protein]. Its function is as follows. NAD-dependent lysine deacetylase and desuccinylase that specifically removes acetyl and succinyl groups on target proteins. Modulates the activities of several proteins which are inactive in their acylated form. The protein is NAD-dependent protein deacylase of Bacteroides thetaiotaomicron (strain ATCC 29148 / DSM 2079 / JCM 5827 / CCUG 10774 / NCTC 10582 / VPI-5482 / E50).